We begin with the raw amino-acid sequence, 335 residues long: Peflin (335 aa).

The segment covering 23–37 has biased composition (basic and acidic residues); sequence AMEETRREFEKEKQR. The tract at residues 23-92 is disordered; that stretch reads AMEETRREFE…SPRHTKTPVD (70 aa). The span at 43–53 shows a compositional bias: polar residues; the sequence is VTQAQTPNTRV. EF-hand domains lie at 144–192, 198–223, 224–259, 260–300, and 301–332; these read KVAP…DDNS, SVDA…IALY, KRVK…LGYL, IPFE…LMRL, and TKLF…LGRF. Positions 170, 176, and 181 each coordinate Ca(2+). Residues Asp237, Asn239, Ser241, Thr243, and Glu248 each coordinate Ca(2+).

In terms of assembly, homodimer.

The protein resides in the cytoplasm. The protein localises to the nucleus. It localises to the bud tip. Its subcellular location is the bud neck. Calcium-binding protein that is required for polar bud growth and cell wall abscission. Can also bind zinc ions. This Saccharomyces cerevisiae (strain ATCC 204508 / S288c) (Baker's yeast) protein is Peflin (PEF1).